The chain runs to 387 residues: DNA primase small subunit PriS (387 aa).

Active-site residues include aspartate 98, aspartate 100, and aspartate 289.

It belongs to the eukaryotic-type primase small subunit family. As to quaternary structure, heterodimer of a small subunit (PriS) and a large subunit (PriL). It depends on Mg(2+) as a cofactor. Mn(2+) is required as a cofactor.

Functionally, catalytic subunit of DNA primase, an RNA polymerase that catalyzes the synthesis of short RNA molecules used as primers for DNA polymerase during DNA replication. The small subunit contains the primase catalytic core and has DNA synthesis activity on its own. Binding to the large subunit stabilizes and modulates the activity, increasing the rate of DNA synthesis while decreasing the length of the DNA fragments, and conferring RNA synthesis capability. The DNA polymerase activity may enable DNA primase to also catalyze primer extension after primer synthesis. May also play a role in DNA repair. This chain is DNA primase small subunit PriS, found in Halorubrum lacusprofundi (strain ATCC 49239 / DSM 5036 / JCM 8891 / ACAM 34).